Here is a 71-residue protein sequence, read N- to C-terminus: Protein YqgC (71 aa).

This is Protein YqgC (yqgC) from Escherichia coli (strain K12).